A 269-amino-acid chain; its full sequence is 4-hydroxy-tetrahydrodipicolinate reductase (269 aa).

NAD(+) is bound by residues 10–15 and glutamate 36; that span reads GSSGRM. Arginine 37 contributes to the NADP(+) binding site. NAD(+) is bound by residues 99–101 and 123–126; these read GTT and APNM. Histidine 156 functions as the Proton donor/acceptor in the catalytic mechanism. Histidine 157 contributes to the (S)-2,3,4,5-tetrahydrodipicolinate binding site. Lysine 160 (proton donor) is an active-site residue. 166 to 167 is a (S)-2,3,4,5-tetrahydrodipicolinate binding site; sequence GT.

This sequence belongs to the DapB family.

It is found in the cytoplasm. It catalyses the reaction (S)-2,3,4,5-tetrahydrodipicolinate + NAD(+) + H2O = (2S,4S)-4-hydroxy-2,3,4,5-tetrahydrodipicolinate + NADH + H(+). The catalysed reaction is (S)-2,3,4,5-tetrahydrodipicolinate + NADP(+) + H2O = (2S,4S)-4-hydroxy-2,3,4,5-tetrahydrodipicolinate + NADPH + H(+). The protein operates within amino-acid biosynthesis; L-lysine biosynthesis via DAP pathway; (S)-tetrahydrodipicolinate from L-aspartate: step 4/4. In terms of biological role, catalyzes the conversion of 4-hydroxy-tetrahydrodipicolinate (HTPA) to tetrahydrodipicolinate. In Nitrosospira multiformis (strain ATCC 25196 / NCIMB 11849 / C 71), this protein is 4-hydroxy-tetrahydrodipicolinate reductase.